The following is a 152-amino-acid chain: Nucleoside diphosphate kinase (152 aa).

ATP contacts are provided by K10, F58, R86, T92, R103, and N113. The active-site Pros-phosphohistidine intermediate is the H116.

It belongs to the NDK family. It depends on Mg(2+) as a cofactor.

It is found in the cytoplasm. The enzyme catalyses a 2'-deoxyribonucleoside 5'-diphosphate + ATP = a 2'-deoxyribonucleoside 5'-triphosphate + ADP. The catalysed reaction is a ribonucleoside 5'-diphosphate + ATP = a ribonucleoside 5'-triphosphate + ADP. In terms of biological role, major role in the synthesis of nucleoside triphosphates other than ATP. The ATP gamma phosphate is transferred to the NDP beta phosphate via a ping-pong mechanism, using a phosphorylated active-site intermediate. The chain is Nucleoside diphosphate kinase from Methanosphaera stadtmanae (strain ATCC 43021 / DSM 3091 / JCM 11832 / MCB-3).